The sequence spans 211 residues: PDR1 up-regulated protein 1 (211 aa).

The next 2 helical transmembrane spans lie at 45–67 (ISKA…PYAY) and 82–99 (RTIL…NVAA).

Belongs to the PUP1 family.

The protein localises to the mitochondrion membrane. Functionally, mitochondrial protein that contributes to the enhanced virulence of C.glabrata strains that acquired azole resistance. In Candida glabrata (strain ATCC 2001 / BCRC 20586 / JCM 3761 / NBRC 0622 / NRRL Y-65 / CBS 138) (Yeast), this protein is PDR1 up-regulated protein 1.